The sequence spans 349 residues: KH domain-containing, RNA-binding, signal transduction-associated protein 2 (349 aa).

One can recognise a KH domain in the interval 65–135; the sequence is LIPVKQYPKF…HLSDELHVLI (71 aa). Disordered stretches follow at residues 182–284 and 319–349; these read EDSG…DDQT and PEEWATTRSSLKAPPQRSARGGYREHPYGRY. Omega-N-methylarginine occurs at positions 230 and 240. The span at 340–349 shows a compositional bias: basic and acidic residues; the sequence is GYREHPYGRY.

It belongs to the KHDRBS family. Self-associates to form homooligomers. Interacts with KHDRBS1/SAM68; heterooligomer formation of KHDRBS family proteins may modulate RNA substrate specificity. Interacts with RBMX. Interacts with SAFB, SFRS9 and YTHDC1. Interacts with FYN and PLCG1 (via SH3 domain). Interacts (phosphorylated) with FYN, GRB2, PLCG1 and RASA1 (via SH2 domain). Methylated. In terms of processing, tyrosine phosphorylated by FYN, PTK6 and SRC. Tyrosine phosphorylated by SRC during mitosis. In terms of tissue distribution, highly expressed in brain, lung, kidney and small intestine. Weakly expressed in placenta, liver, spleen, thymus, ovary and colon.

The protein localises to the nucleus. In terms of biological role, RNA-binding protein that plays a role in the regulation of alternative splicing and influences mRNA splice site selection and exon inclusion. Binds both poly(A) and poly(U) homopolymers. Phosphorylation by PTK6 inhibits its RNA-binding ability. Induces an increased concentration-dependent incorporation of exon in CD44 pre-mRNA by direct binding to purine-rich exonic enhancer. Can regulate alternative splicing of NRXN1 in the laminin G-like domain 6 containing the evolutionary conserved neurexin alternative spliced segment 4 (AS4) involved in neurexin selective targeting to postsynaptic partners. Regulates cell-type specific alternative splicing of NRXN1 at AS4 and acts synergystically with SAM68 in exon skipping. In contrast acts antagonistically with SAM68 in NRXN3 exon skipping at AS4. Its phosphorylation by FYN inhibits its ability to regulate splice site selection. May function as an adapter protein for Src kinases during mitosis. In Homo sapiens (Human), this protein is KH domain-containing, RNA-binding, signal transduction-associated protein 2 (KHDRBS2).